The chain runs to 436 residues: Ribulose bisphosphate carboxylase large chain (436 aa).

Asparagine 104 and threonine 154 together coordinate substrate. Residue lysine 156 is the Proton acceptor of the active site. Residue lysine 158 participates in substrate binding. Residues lysine 182, aspartate 184, and glutamate 185 each contribute to the Mg(2+) site. Lysine 182 is modified (N6-carboxylysine). Catalysis depends on histidine 275, which acts as the Proton acceptor. Substrate is bound by residues arginine 276, histidine 308, and serine 360.

The protein belongs to the RuBisCO large chain family. Type I subfamily. In terms of assembly, heterohexadecamer of 8 large chains and 8 small chains. Mg(2+) serves as cofactor.

Its subcellular location is the plastid. The protein resides in the chloroplast. The catalysed reaction is 2 (2R)-3-phosphoglycerate + 2 H(+) = D-ribulose 1,5-bisphosphate + CO2 + H2O. It catalyses the reaction D-ribulose 1,5-bisphosphate + O2 = 2-phosphoglycolate + (2R)-3-phosphoglycerate + 2 H(+). In terms of biological role, ruBisCO catalyzes two reactions: the carboxylation of D-ribulose 1,5-bisphosphate, the primary event in carbon dioxide fixation, as well as the oxidative fragmentation of the pentose substrate in the photorespiration process. Both reactions occur simultaneously and in competition at the same active site. The protein is Ribulose bisphosphate carboxylase large chain of Euglena viridis (Cercaria viridis).